A 334-amino-acid chain; its full sequence is MSENVVSTGAVNAVKEVWEKRIKKLNEDLKREKEFQQKLVRIWEERVCLTKLREKVTKEDGRVILKIEKEEWKTLPSSLLKLNQLQEWQLHRIGLLKIPEFIGRFQNLIVLDLSRNTITEIPRGIGLLTRLQELILSYNRIKTVPMELSYCASLEKLELAVNRDISDLPQELSNLLKLTHLDLSMNLFTTIPPAVLNMPALEWLDMGSNRLEQLPDTIERMQNLHTLWLQRNEITCLPETISSMKNLSTLVLSNNKLQDIPVCMEKMTNLRFVNFRDNPLKLEVTLPPSENIEEEEERELFGLQFMHTYIQESRRAGNQVNCSTTSPNSIDADG.

Positions 10 to 47 form a coiled coil; that stretch reads AVNAVKEVWEKRIKKLNEDLKREKEFQQKLVRIWEERV. LRR repeat units follow at residues 84–105, 107–128, 130–151, 153–176, 177–198, 200–221, 223–244, 246–267, and 269–290; these read QLQEWQLHRIGLLKIPEFIGRF, NLIVLDLSRNTITEIPRGIGLL, RLQELILSYNRIKTVPMELSYC, SLEKLELAVNRDISDLPQELSNLL, KLTHLDLSMNLFTTIPPAVLNM, ALEWLDMGSNRLEQLPDTIERM, NLHTLWLQRNEITCLPETISSM, NLSTLVLSNNKLQDIPVCMEKM, and NLRFVNFRDNPLKLEVTLPPSE.

Interacts with MYH7 (via C-terminus).

It is found in the cytoplasm. Its subcellular location is the myofibril. It localises to the sarcomere. The protein resides in the m line. Functionally, component of the sarcomeric M-band which plays a role in myocyte response to biomechanical stress. May regulate expression of other M-band proteins via an SRF-dependent pathway. Important for normal contractile function in heart. The chain is Leucine-rich repeat-containing protein 39 from Bos taurus (Bovine).